A 481-amino-acid polypeptide reads, in one-letter code: MDLSNLTLTKIQELVLTKKCKIYDILLAYKNNYELNKDINGYIEFFDDSLEIAKRYDDFLRNCELEDLPLIGMLIAVKDNISIQDKSLTCASEILKGYISPYDATVIKRLKNKGAILIGRTNMDEFAMGSTCEFSYYGATLNPLNREYVIGGSSGGSAAVVAAFQAPFSLGSDTGGSVRLPASFSGILGFKPSYGGLSRYGLASYASSFDQIGFFAHSIEDIALILKHTCGADKMDSTSVDIFDDFYPLKIESLQGKNLAVIKELGEDLMDKNVASSFAKFKFDLLSKGINIKEVSIEEINFILSIYYTISPVEASSNLARYTGLCYGKRMSENLSLNDFYFKHRSNFLSEEVKRRIVLGNYLLSEGYDSKYYSKACEILQNLIIPKFNKLFESCDFIITPTSFVKPFRAGLDFDDPVKMYYSDICTVIANLIGAPAISLPYSKDKEGLSIGMQIIGRSKKDFELLSFSKNVIRELGLNGI.

Residues lysine 78 and serine 153 each act as charge relay system in the active site. Residue serine 177 is the Acyl-ester intermediate of the active site.

This sequence belongs to the amidase family. GatA subfamily. As to quaternary structure, heterotrimer of A, B and C subunits.

It carries out the reaction L-glutamyl-tRNA(Gln) + L-glutamine + ATP + H2O = L-glutaminyl-tRNA(Gln) + L-glutamate + ADP + phosphate + H(+). Allows the formation of correctly charged Gln-tRNA(Gln) through the transamidation of misacylated Glu-tRNA(Gln) in organisms which lack glutaminyl-tRNA synthetase. The reaction takes place in the presence of glutamine and ATP through an activated gamma-phospho-Glu-tRNA(Gln). This chain is Glutamyl-tRNA(Gln) amidotransferase subunit A, found in Borreliella afzelii (strain PKo) (Borrelia afzelii).